Here is a 258-residue protein sequence, read N- to C-terminus: Global transcriptional regulator CodY (258 aa).

A GAF domain region spans residues methionine 1–leucine 156. The H-T-H motif DNA-binding region spans alanine 204–arginine 223.

The protein belongs to the CodY family.

The protein resides in the cytoplasm. Its function is as follows. DNA-binding global transcriptional regulator which is involved in the adaptive response to starvation and acts by directly or indirectly controlling the expression of numerous genes in response to nutrient availability. During rapid exponential growth, CodY is highly active and represses genes whose products allow adaptation to nutrient depletion. The polypeptide is Global transcriptional regulator CodY (Clostridium botulinum (strain ATCC 19397 / Type A)).